Here is a 626-residue protein sequence, read N- to C-terminus: Putative folylpolyglutamate synthase (626 aa).

144–147 (GKGS) lines the ATP pocket. Mg(2+)-binding residues include Ser168, Glu235, and His263. Positions 412 and 430 each coordinate ATP.

The protein belongs to the folylpolyglutamate synthase family.

It catalyses the reaction (6S)-5,6,7,8-tetrahydrofolyl-(gamma-L-Glu)(n) + L-glutamate + ATP = (6S)-5,6,7,8-tetrahydrofolyl-(gamma-L-Glu)(n+1) + ADP + phosphate + H(+). It participates in cofactor biosynthesis; tetrahydrofolylpolyglutamate biosynthesis. Conversion of folates to polyglutamate derivatives. The sequence is that of Putative folylpolyglutamate synthase (folC) from Dictyostelium discoideum (Social amoeba).